Consider the following 268-residue polypeptide: Leucyl/phenylalanyl-tRNA--protein transferase (268 aa).

Belongs to the L/F-transferase family.

Its subcellular location is the cytoplasm. It carries out the reaction N-terminal L-lysyl-[protein] + L-leucyl-tRNA(Leu) = N-terminal L-leucyl-L-lysyl-[protein] + tRNA(Leu) + H(+). It catalyses the reaction N-terminal L-arginyl-[protein] + L-leucyl-tRNA(Leu) = N-terminal L-leucyl-L-arginyl-[protein] + tRNA(Leu) + H(+). The catalysed reaction is L-phenylalanyl-tRNA(Phe) + an N-terminal L-alpha-aminoacyl-[protein] = an N-terminal L-phenylalanyl-L-alpha-aminoacyl-[protein] + tRNA(Phe). In terms of biological role, functions in the N-end rule pathway of protein degradation where it conjugates Leu, Phe and, less efficiently, Met from aminoacyl-tRNAs to the N-termini of proteins containing an N-terminal arginine or lysine. This chain is Leucyl/phenylalanyl-tRNA--protein transferase, found in Zymomonas mobilis subsp. mobilis (strain ATCC 31821 / ZM4 / CP4).